A 163-amino-acid polypeptide reads, in one-letter code: 3-isopropylmalate dehydratase small subunit (163 aa).

This sequence belongs to the LeuD family. LeuD type 2 subfamily. Heterodimer of LeuC and LeuD.

The enzyme catalyses (2R,3S)-3-isopropylmalate = (2S)-2-isopropylmalate. The protein operates within amino-acid biosynthesis; L-leucine biosynthesis; L-leucine from 3-methyl-2-oxobutanoate: step 2/4. Catalyzes the isomerization between 2-isopropylmalate and 3-isopropylmalate, via the formation of 2-isopropylmaleate. In Thermococcus kodakarensis (strain ATCC BAA-918 / JCM 12380 / KOD1) (Pyrococcus kodakaraensis (strain KOD1)), this protein is 3-isopropylmalate dehydratase small subunit.